Reading from the N-terminus, the 79-residue chain is uncharacterized protein (79 aa).

The N-terminal stretch at methionine 1 to alanine 20 is a signal peptide.

This is an uncharacterized protein from Bacillus subtilis (strain 168).